The following is a 246-amino-acid chain: Small ribosomal subunit protein uS2 (246 aa).

It belongs to the universal ribosomal protein uS2 family.

In Burkholderia cenocepacia (strain HI2424), this protein is Small ribosomal subunit protein uS2.